The sequence spans 194 residues: MASKGPTTSASTKSSSTGGTSGSSSSNGAGDNTNQDNTFECNICLDTAKDAVISLCGHLFCWPCLHQWLETRPNRQVCPVCKAGISRDKVIPLYGRGSTGQQDPREKTPPRPQGQRPEPENRGGFQGFGFGDGGFQMSFGIGAFPFGIFATAFNINDGRPPPAVPGTPQYVDEQFLSRLFLFVALVIMFWLLIA.

The disordered stretch occupies residues M1–N32. The segment at D31–K82 is required for ubiquitin ligase activity and protection against ER stress-induced cell death. The segment at C41–K82 adopts an RING-type zinc-finger fold. Positions P92 to F125 are disordered. 2 helical membrane passes run G133–F153 and Q174–A194.

It localises to the mitochondrion outer membrane. The protein resides in the endoplasmic reticulum membrane. The enzyme catalyses S-ubiquitinyl-[E2 ubiquitin-conjugating enzyme]-L-cysteine + [acceptor protein]-L-lysine = [E2 ubiquitin-conjugating enzyme]-L-cysteine + N(6)-ubiquitinyl-[acceptor protein]-L-lysine.. It functions in the pathway protein modification; protein ubiquitination. E3 ubiquitin-protein ligase that regulates selective mitochondrial autophagy by mediating 'Lys-63'-linked polyubiquitination. Acts in the endoplasmic reticulum (ER)-associated degradation (ERAD) pathway, which targets misfolded proteins that accumulate in the endoplasmic reticulum (ER) for ubiquitination and subsequent proteasome-mediated degradation. Protects cells from ER stress-induced apoptosis. Responsible for the cotranslational ubiquitination and degradation of CFTR in the ERAD pathway. Also acts as a regulator of the innate antiviral response by catalyzing 'Lys-27'-linked polyubiquitination of CGAS, thereby promoting CGAS cyclic GMP-AMP synthase activity. Preferentially associates with the E2 enzymes UBE2J1 and UBE2J2. This chain is E3 ubiquitin-protein ligase RNF185 (RNF185), found in Gallus gallus (Chicken).